The sequence spans 685 residues: Cilia- and flagella-associated protein 36 (685 aa).

Residues 1 to 20 (MLRRFSKKNKNPEGGSDDAS) are disordered. Residues 197-242 (SEELEMMAQNSRIQREALEQEIRKEEILLQQALDEGARAQNQNQNQ) are a coiled coil. Positions 287–310 (TGTMTSSTGVSVGTLTNTGVSSGT) are enriched in low complexity. A disordered region spans residues 287–573 (TGTMTSSTGV…LRGNKYDGDV (287 aa)). Positions 363 to 372 (EAEKSKRERP) are enriched in basic and acidic residues. The span at 410-434 (GTTSKKSIATVTASPEMSSKTTQME) shows a compositional bias: polar residues. Composition is skewed to basic and acidic residues over residues 439-456 (GEGK…ERKY) and 508-557 (HEPR…ESKP).

Belongs to the CFAP36 family. In terms of tissue distribution, expressed in amphid and phasmid ciliated neurons.

The protein localises to the cell projection. Its subcellular location is the cilium. It is found in the cytoplasm. It localises to the cytoskeleton. The protein resides in the cilium axoneme. In Caenorhabditis elegans, this protein is Cilia- and flagella-associated protein 36.